Reading from the N-terminus, the 102-residue chain is 10 kDa heat shock protein, mitochondrial (102 aa).

A2 bears the N-acetylalanine mark. N6-acetyllysine is present on K8. K28 carries the N6-succinyllysine modification. Residue K40 is modified to N6-acetyllysine; alternate. Residues K40, K54, and K56 each carry the N6-malonyllysine; alternate modification. N6-succinyllysine; alternate is present on residues K40, K54, and K56. An N6-acetyllysine; alternate modification is found at K56. S57 bears the Phosphoserine mark. N6-acetyllysine; alternate is present on residues K66 and K70. 2 positions are modified to N6-succinyllysine; alternate: K66 and K70. T79 is subject to Phosphothreonine. An N6-acetyllysine; alternate mark is found at K80 and K86. 2 positions are modified to N6-succinyllysine; alternate: K80 and K86. K99 carries the post-translational modification N6-acetyllysine.

The protein belongs to the GroES chaperonin family. Homoheptamer arranged in a ring structure. 2 heptameric Hsp10 rings interact with a Hsp60 tetradecamer in the structure of a back-to-back double heptameric ring to form the symmetrical football complex.

The protein localises to the mitochondrion matrix. Functionally, co-chaperonin implicated in mitochondrial protein import and macromolecular assembly. Together with Hsp60, facilitates the correct folding of imported proteins. May also prevent misfolding and promote the refolding and proper assembly of unfolded polypeptides generated under stress conditions in the mitochondrial matrix. The functional units of these chaperonins consist of heptameric rings of the large subunit Hsp60, which function as a back-to-back double ring. In a cyclic reaction, Hsp60 ring complexes bind one unfolded substrate protein per ring, followed by the binding of ATP and association with 2 heptameric rings of the co-chaperonin Hsp10. This leads to sequestration of the substrate protein in the inner cavity of Hsp60 where, for a certain period of time, it can fold undisturbed by other cell components. Synchronous hydrolysis of ATP in all Hsp60 subunits results in the dissociation of the chaperonin rings and the release of ADP and the folded substrate protein. In Mus musculus (Mouse), this protein is 10 kDa heat shock protein, mitochondrial (Hspe1).